Reading from the N-terminus, the 334-residue chain is Cytosolic Fe-S cluster assembly factor NUBP1 homolog (334 aa).

The disordered stretch occupies residues M1–S24. Residues C19, C33, C36, and C42 each coordinate [4Fe-4S] cluster. G72–S79 is a binding site for ATP. The [4Fe-4S] cluster site is built by C247 and C250.

The protein belongs to the Mrp/NBP35 ATP-binding proteins family. NUBP1/NBP35 subfamily. Heterotetramer of 2 NUBP1 and 2 NUBP2 chains. It depends on [4Fe-4S] cluster as a cofactor.

It localises to the cytoplasm. In terms of biological role, component of the cytosolic iron-sulfur (Fe/S) protein assembly (CIA) machinery. Required for maturation of extramitochondrial Fe-S proteins. The NUBP1-NUBP2 heterotetramer forms a Fe-S scaffold complex, mediating the de novo assembly of an Fe-S cluster and its transfer to target apoproteins. The protein is Cytosolic Fe-S cluster assembly factor NUBP1 homolog of Culex quinquefasciatus (Southern house mosquito).